Consider the following 309-residue polypeptide: Putative taste receptor type 2 member 36 (309 aa).

Met1 is a topological domain (extracellular). Residues 2–22 (ICFLLIILSILVVFAFVLGNF) traverse the membrane as a helical segment. The Cytoplasmic portion of the chain corresponds to 23 to 46 (SNGFIALVNVIDWVKRQKISSADQ). Residues 47–67 (ILTALVVSRVGLLWVILLHWY) form a helical membrane-spanning segment. Over 68–79 (SNVLNSALYSSE) the chain is Extracellular. The helical transmembrane segment at 80–100 (VIIFISNAWAIINHFSIWLAT) threads the bilayer. Residues 101-126 (SLSIFYLLKIVNFSRLIFHHLKRKAK) are Cytoplasmic-facing. A helical membrane pass occupies residues 127 to 147 (SVVLVIVLGPLVFLVCHLVMK). The Extracellular portion of the chain corresponds to 148-181 (HTYINVWTKEYEGNVTWKIKLRNAIHLSNLTVST). Asn161 and Asn176 each carry an N-linked (GlcNAc...) asparagine glycan. The chain crosses the membrane as a helical span at residues 182–202 (LANLIPFTLTLISFLLLIYSL). Over 203 to 229 (CKHLKKMQLHGKGSQDPSTKVHIKALQ) the chain is Cytoplasmic. A helical transmembrane segment spans residues 230–250 (TVTSFLLLCAIYFLSMIISVC). The Extracellular portion of the chain corresponds to 251-259 (NFGRLEKQP). A helical membrane pass occupies residues 260–280 (VFMFCQAIIFSYPSTHPFILI). The Cytoplasmic portion of the chain corresponds to 281–309 (LGNKKLKQIFLSVFWQMRYWVKGEKPSSP).

It belongs to the G-protein coupled receptor T2R family.

It is found in the membrane. Putative taste receptor which may play a role in the perception of bitterness. In Homo sapiens (Human), this protein is Putative taste receptor type 2 member 36.